A 230-amino-acid polypeptide reads, in one-letter code: 2,3-bisphosphoglycerate-dependent phosphoglycerate mutase (230 aa).

Residues Arg8–Asn15, Thr21–Gly22, Arg60, Glu87–Tyr90, Lys98, Arg114–Arg115, and Gly183–Asn184 each bind substrate. Catalysis depends on His9, which acts as the Tele-phosphohistidine intermediate. Catalysis depends on Glu87, which acts as the Proton donor/acceptor.

This sequence belongs to the phosphoglycerate mutase family. BPG-dependent PGAM subfamily.

The catalysed reaction is (2R)-2-phosphoglycerate = (2R)-3-phosphoglycerate. The protein operates within carbohydrate degradation; glycolysis; pyruvate from D-glyceraldehyde 3-phosphate: step 3/5. Its function is as follows. Catalyzes the interconversion of 2-phosphoglycerate and 3-phosphoglycerate. The polypeptide is 2,3-bisphosphoglycerate-dependent phosphoglycerate mutase (Streptococcus thermophilus (strain CNRZ 1066)).